The following is a 489-amino-acid chain: Serotonin-gated chloride channel mod-1 (489 aa).

Residues 1–20 (MKFIPEITLLLLLFVHSTQA) form the signal peptide. Over 21 to 240 (KGKRRKCPEG…VTFTFKRRYG (220 aa)) the chain is Extracellular. N-linked (GlcNAc...) asparagine glycosylation is found at asparagine 44, asparagine 103, and asparagine 144. 2 residues coordinate serotonin: tyrosine 180 and tryptophan 226. A run of 3 helical transmembrane segments spans residues 241-261 (FYII…WVSF), 274-294 (VGIS…KNLP), and 304-324 (VWML…AFVC). At 325 to 458 (YISRCQNSVR…ARFHPEAVDK (134 aa)) the chain is on the cytoplasmic side. The tract at residues 365–398 (GSVISHYHPTSNGNGNNNRHDTPQVTGRGSLHRN) is disordered. A compositionally biased stretch (polar residues) spans 372 to 391 (HPTSNGNGNNNRHDTPQVTG). A helical membrane pass occupies residues 459–479 (FSIVAFPLAFTMFNLVYWWHY).

This sequence belongs to the ligand-gated ion channel (TC 1.A.9) family. In terms of tissue distribution, expressed in a subset of muscles, and head and tail neurons, including RME and GABAergic ventral nerve cord neurons. Expressed in AIY, RME, RID, RIF, ASI, DD1-6, and PVN neurons.

It localises to the membrane. The protein resides in the cell membrane. Its function is as follows. Functions as a 5-hydroxytryptamine (serotonin) receptor. This receptor is a ligand-gated anion-specific ion channel, selective for chloride ions. Relays a long-range endocrine signal from the body cavity neurons to modulate distal adipose triglyceride lipase atgl-1 function, via the nuclear receptor nhr-76. Together with the G-protein coupled serotonin receptor ser-1 involved in male mating behavior. May mediate an inhibitory effect of serotonin on egg laying. Involved in regulating locomotory behavior, perhaps by modulating interneuronal signaling, acting in concert with G-protein coupled serotonin receptor ser-4. In the presence of food, plays a role in initiating and extending dwelling behavior, perhaps acting in AIY, RIF and ASI neurons, in opposition to neuropeptide PDF-mediated signaling. Plays a role in aversive learning upon exposure to pathogens such as Gram-negative bacterium P.aeruginosa strain PA14; perhaps acting in interneurons in response to serotonin released by the serotonergic ADF neurons. This is Serotonin-gated chloride channel mod-1 from Caenorhabditis elegans.